Here is a 430-residue protein sequence, read N- to C-terminus: Adenylosuccinate synthetase (430 aa).

GTP is bound by residues 12–18 (GDEGKGK) and 40–42 (GHT). Aspartate 13 acts as the Proton acceptor in catalysis. Mg(2+) is bound by residues aspartate 13 and glycine 40. Residues 13 to 16 (DEGK), 38 to 41 (NAGH), threonine 128, arginine 142, glutamine 223, threonine 238, and arginine 302 each bind IMP. The active-site Proton donor is histidine 41. 298 to 304 (TVTKRPR) contacts substrate. GTP contacts are provided by residues arginine 304, 330 to 332 (CVD), and 412 to 414 (SVG).

The protein belongs to the adenylosuccinate synthetase family. Homodimer. Requires Mg(2+) as cofactor.

It is found in the cytoplasm. The enzyme catalyses IMP + L-aspartate + GTP = N(6)-(1,2-dicarboxyethyl)-AMP + GDP + phosphate + 2 H(+). It participates in purine metabolism; AMP biosynthesis via de novo pathway; AMP from IMP: step 1/2. In terms of biological role, plays an important role in the de novo pathway of purine nucleotide biosynthesis. Catalyzes the first committed step in the biosynthesis of AMP from IMP. This chain is Adenylosuccinate synthetase, found in Ligilactobacillus salivarius (strain UCC118) (Lactobacillus salivarius).